Here is a 310-residue protein sequence, read N- to C-terminus: Acetylglutamate kinase (310 aa).

Substrate contacts are provided by residues 70-71 (GG), arginine 92, and asparagine 191.

It belongs to the acetylglutamate kinase family. ArgB subfamily.

The protein localises to the cytoplasm. It carries out the reaction N-acetyl-L-glutamate + ATP = N-acetyl-L-glutamyl 5-phosphate + ADP. It participates in amino-acid biosynthesis; L-arginine biosynthesis; N(2)-acetyl-L-ornithine from L-glutamate: step 2/4. In terms of biological role, catalyzes the ATP-dependent phosphorylation of N-acetyl-L-glutamate. This Corynebacterium diphtheriae (strain ATCC 700971 / NCTC 13129 / Biotype gravis) protein is Acetylglutamate kinase.